The chain runs to 147 residues: Ubiquitin-conjugating enzyme E2 D4 (147 aa).

In terms of domain architecture, UBC core spans 1-147; the sequence is MALKRIQKEL…AREWTQKYAM (147 aa). Cysteine 85 acts as the Glycyl thioester intermediate in catalysis.

This sequence belongs to the ubiquitin-conjugating enzyme family. In terms of assembly, interacts with map3k10/mlk2. At embryonic stages 28 to 35, expressed in the somites, eye primordia, otic vesicle and branchial arches. By stage 35, also weakly expressed in the pronephros.

The enzyme catalyses S-ubiquitinyl-[E1 ubiquitin-activating enzyme]-L-cysteine + [E2 ubiquitin-conjugating enzyme]-L-cysteine = [E1 ubiquitin-activating enzyme]-L-cysteine + S-ubiquitinyl-[E2 ubiquitin-conjugating enzyme]-L-cysteine.. Its pathway is protein modification; protein ubiquitination. Catalyzes the covalent attachment of ubiquitin to other proteins. Regulates pronephros development, possibly by promoting ubiquitination and thus inactivation or degradation of map3k10/mlk2. This chain is Ubiquitin-conjugating enzyme E2 D4 (ube2d4), found in Xenopus laevis (African clawed frog).